The chain runs to 865 residues: Protein translocase subunit SecA (865 aa).

Residues Gln93, 111–115 (GEGKT), and Asp501 each bind ATP. Zn(2+) is bound by residues Cys841, Cys843, Cys852, and Cys853.

It belongs to the SecA family. As to quaternary structure, monomer and homodimer. Part of the essential Sec protein translocation apparatus which comprises SecA, SecYEG and auxiliary proteins SecDF-YajC and YidC. It depends on Zn(2+) as a cofactor.

It is found in the cell inner membrane. The protein localises to the cytoplasm. It carries out the reaction ATP + H2O + cellular proteinSide 1 = ADP + phosphate + cellular proteinSide 2.. Part of the Sec protein translocase complex. Interacts with the SecYEG preprotein conducting channel. Has a central role in coupling the hydrolysis of ATP to the transfer of proteins into and across the cell membrane, serving as an ATP-driven molecular motor driving the stepwise translocation of polypeptide chains across the membrane. The protein is Protein translocase subunit SecA of Helicobacter pylori (strain G27).